Consider the following 660-residue polypeptide: Bifunctional polymyxin resistance protein ArnA (660 aa).

Positions methionine 1–leucine 304 are formyltransferase ArnAFT. Histidine 86–isoleucine 88 contributes to the (6R)-10-formyltetrahydrofolate binding site. Histidine 104 functions as the Proton donor; for formyltransferase activity in the catalytic mechanism. (6R)-10-formyltetrahydrofolate is bound by residues arginine 114 and valine 136–aspartate 140. The tract at residues arginine 314–serine 660 is dehydrogenase ArnADH. Residues aspartate 347 and aspartate 368 to isoleucine 369 each bind NAD(+). Residues alanine 393, tyrosine 398, and threonine 432 to serine 433 each bind UDP-alpha-D-glucuronate. Glutamate 434 functions as the Proton acceptor; for decarboxylase activity in the catalytic mechanism. Residues arginine 460, asparagine 492, lysine 526–arginine 535, and tyrosine 613 each bind UDP-alpha-D-glucuronate. Catalysis depends on arginine 619, which acts as the Proton donor; for decarboxylase activity.

The protein in the N-terminal section; belongs to the Fmt family. UDP-L-Ara4N formyltransferase subfamily. It in the C-terminal section; belongs to the NAD(P)-dependent epimerase/dehydratase family. UDP-glucuronic acid decarboxylase subfamily. As to quaternary structure, homohexamer, formed by a dimer of trimers.

It carries out the reaction UDP-alpha-D-glucuronate + NAD(+) = UDP-beta-L-threo-pentopyranos-4-ulose + CO2 + NADH. It catalyses the reaction UDP-4-amino-4-deoxy-beta-L-arabinose + (6R)-10-formyltetrahydrofolate = UDP-4-deoxy-4-formamido-beta-L-arabinose + (6S)-5,6,7,8-tetrahydrofolate + H(+). It functions in the pathway nucleotide-sugar biosynthesis; UDP-4-deoxy-4-formamido-beta-L-arabinose biosynthesis; UDP-4-deoxy-4-formamido-beta-L-arabinose from UDP-alpha-D-glucuronate: step 1/3. Its pathway is nucleotide-sugar biosynthesis; UDP-4-deoxy-4-formamido-beta-L-arabinose biosynthesis; UDP-4-deoxy-4-formamido-beta-L-arabinose from UDP-alpha-D-glucuronate: step 3/3. The protein operates within bacterial outer membrane biogenesis; lipopolysaccharide biosynthesis. Bifunctional enzyme that catalyzes the oxidative decarboxylation of UDP-glucuronic acid (UDP-GlcUA) to UDP-4-keto-arabinose (UDP-Ara4O) and the addition of a formyl group to UDP-4-amino-4-deoxy-L-arabinose (UDP-L-Ara4N) to form UDP-L-4-formamido-arabinose (UDP-L-Ara4FN). The modified arabinose is attached to lipid A and is required for resistance to polymyxin and cationic antimicrobial peptides. This chain is Bifunctional polymyxin resistance protein ArnA, found in Shigella boydii serotype 4 (strain Sb227).